The sequence spans 45 residues: Osteocalcin (45 aa).

The Gla domain occupies 1–41; sequence AAGELTLTQLESLREVCEANLACEDMMDAQGIIAAYTAYYG. Ca(2+) contacts are provided by glutamate 11, glutamate 15, glutamate 18, and glutamate 24. Residues glutamate 11, glutamate 15, and glutamate 18 each carry the 4-carboxyglutamate modification. Cysteines 17 and 23 form a disulfide.

Belongs to the osteocalcin/matrix Gla protein family. Gamma-carboxyglutamate residues are formed by vitamin K dependent carboxylation by GGCX. These residues are essential for the binding of calcium. In terms of tissue distribution, also found in smaller quantities in dentin.

Its subcellular location is the secreted. The carboxylated form is one of the main organic components of the bone matrix, which constitutes 1-2% of the total bone protein. The carboxylated form binds strongly to apatite and calcium. In Lepomis macrochirus (Bluegill), this protein is Osteocalcin (bglap).